Here is a 306-residue protein sequence, read N- to C-terminus: Ribonuclease Z (306 aa).

Zn(2+) is bound by residues histidine 63, histidine 65, aspartate 67, histidine 68, histidine 141, aspartate 211, and histidine 269. The active-site Proton acceptor is aspartate 67.

Belongs to the RNase Z family. In terms of assembly, homodimer. Zn(2+) serves as cofactor.

It catalyses the reaction Endonucleolytic cleavage of RNA, removing extra 3' nucleotides from tRNA precursor, generating 3' termini of tRNAs. A 3'-hydroxy group is left at the tRNA terminus and a 5'-phosphoryl group is left at the trailer molecule.. Zinc phosphodiesterase, which displays some tRNA 3'-processing endonuclease activity. Probably involved in tRNA maturation, by removing a 3'-trailer from precursor tRNA. The protein is Ribonuclease Z of Staphylococcus epidermidis (strain ATCC 35984 / DSM 28319 / BCRC 17069 / CCUG 31568 / BM 3577 / RP62A).